The chain runs to 114 residues: Phosphoribosyl-AMP cyclohydrolase (114 aa).

Aspartate 80 is a binding site for Mg(2+). Cysteine 81 contacts Zn(2+). The Mg(2+) site is built by aspartate 82 and aspartate 84. The Zn(2+) site is built by cysteine 97 and cysteine 104.

The protein belongs to the PRA-CH family. As to quaternary structure, homodimer. Requires Mg(2+) as cofactor. Zn(2+) serves as cofactor.

It localises to the cytoplasm. It catalyses the reaction 1-(5-phospho-beta-D-ribosyl)-5'-AMP + H2O = 1-(5-phospho-beta-D-ribosyl)-5-[(5-phospho-beta-D-ribosylamino)methylideneamino]imidazole-4-carboxamide. It participates in amino-acid biosynthesis; L-histidine biosynthesis; L-histidine from 5-phospho-alpha-D-ribose 1-diphosphate: step 3/9. In terms of biological role, catalyzes the hydrolysis of the adenine ring of phosphoribosyl-AMP. The sequence is that of Phosphoribosyl-AMP cyclohydrolase from Rhodococcus jostii (strain RHA1).